Here is a 133-residue protein sequence, read N- to C-terminus: Small ribosomal subunit protein uS8 (133 aa).

The protein belongs to the universal ribosomal protein uS8 family. Part of the 30S ribosomal subunit. Contacts proteins S5 and S12.

Its function is as follows. One of the primary rRNA binding proteins, it binds directly to 16S rRNA central domain where it helps coordinate assembly of the platform of the 30S subunit. The protein is Small ribosomal subunit protein uS8 of Chlamydia trachomatis serovar A (strain ATCC VR-571B / DSM 19440 / HAR-13).